A 433-amino-acid chain; its full sequence is UDP-N-acetylglucosamine 1-carboxyvinyltransferase (433 aa).

Residue 34–35 (KN) coordinates phosphoenolpyruvate. Arg104 is a UDP-N-acetyl-alpha-D-glucosamine binding site. The Proton donor role is filled by Cys128. Cys128 is modified (2-(S-cysteinyl)pyruvic acid O-phosphothioketal). The UDP-N-acetyl-alpha-D-glucosamine site is built by Asp320 and Ile342.

The protein belongs to the EPSP synthase family. MurA subfamily.

It localises to the cytoplasm. The catalysed reaction is phosphoenolpyruvate + UDP-N-acetyl-alpha-D-glucosamine = UDP-N-acetyl-3-O-(1-carboxyvinyl)-alpha-D-glucosamine + phosphate. The protein operates within cell wall biogenesis; peptidoglycan biosynthesis. In terms of biological role, cell wall formation. Adds enolpyruvyl to UDP-N-acetylglucosamine. This Parasynechococcus marenigrum (strain WH8102) protein is UDP-N-acetylglucosamine 1-carboxyvinyltransferase.